A 205-amino-acid polypeptide reads, in one-letter code: Dephospho-CoA kinase (205 aa).

Residues 4–203 (KIGITGGIGS…QKIHYLCSAK (200 aa)) enclose the DPCK domain. ATP is bound at residue 12 to 17 (GSGKSV).

The protein belongs to the CoaE family.

It is found in the cytoplasm. The enzyme catalyses 3'-dephospho-CoA + ATP = ADP + CoA + H(+). Its pathway is cofactor biosynthesis; coenzyme A biosynthesis; CoA from (R)-pantothenate: step 5/5. Catalyzes the phosphorylation of the 3'-hydroxyl group of dephosphocoenzyme A to form coenzyme A. This Bacteroides fragilis (strain ATCC 25285 / DSM 2151 / CCUG 4856 / JCM 11019 / LMG 10263 / NCTC 9343 / Onslow / VPI 2553 / EN-2) protein is Dephospho-CoA kinase.